The chain runs to 337 residues: Anthranilate phosphoribosyltransferase (337 aa).

5-phospho-alpha-D-ribose 1-diphosphate-binding positions include Gly80, 83–84 (GD), Thr88, 90–93 (NIST), 108–116 (KHGNRAVSS), and Ser120. Gly80 contributes to the anthranilate binding site. Ser92 serves as a coordination point for Mg(2+). Asn111 contacts anthranilate. Residue Arg166 coordinates anthranilate. Residues Asp224 and Glu225 each coordinate Mg(2+).

This sequence belongs to the anthranilate phosphoribosyltransferase family. In terms of assembly, homodimer. The cofactor is Mg(2+).

It carries out the reaction N-(5-phospho-beta-D-ribosyl)anthranilate + diphosphate = 5-phospho-alpha-D-ribose 1-diphosphate + anthranilate. Its pathway is amino-acid biosynthesis; L-tryptophan biosynthesis; L-tryptophan from chorismate: step 2/5. Catalyzes the transfer of the phosphoribosyl group of 5-phosphorylribose-1-pyrophosphate (PRPP) to anthranilate to yield N-(5'-phosphoribosyl)-anthranilate (PRA). The polypeptide is Anthranilate phosphoribosyltransferase (Anaeromyxobacter dehalogenans (strain 2CP-1 / ATCC BAA-258)).